The chain runs to 350 residues: Eukaryotic translation initiation factor 3 subunit I (350 aa).

6 WD repeats span residues 8 to 49 (GHER…GTLE), 51 to 89 (HQGVIWSIDVDPETLLCATGGGDLAVKLWTVENGQCVYT), 91 to 135 (NSPS…ASLT), 149 to 190 (QNGS…KSLQ), 198 to 240 (EKNV…KVYK), and 296 to 335 (GHFGPLNTVAVHPDGTGYSSGGEDGFIRVHTFDKSYKDFL).

Belongs to the eIF-3 subunit I family. As to quaternary structure, component of the eukaryotic translation initiation factor 3 (eIF-3) complex.

It localises to the cytoplasm. In terms of biological role, component of the eukaryotic translation initiation factor 3 (eIF-3) complex, which is involved in protein synthesis of a specialized repertoire of mRNAs and, together with other initiation factors, stimulates binding of mRNA and methionyl-tRNAi to the 40S ribosome. The eIF-3 complex specifically targets and initiates translation of a subset of mRNAs involved in cell proliferation. The chain is Eukaryotic translation initiation factor 3 subunit I from Lodderomyces elongisporus (strain ATCC 11503 / CBS 2605 / JCM 1781 / NBRC 1676 / NRRL YB-4239) (Yeast).